We begin with the raw amino-acid sequence, 205 residues long: Adenylate kinase (205 aa).

10–15 (GAGKGT) provides a ligand contact to ATP. Residues 30–59 (STGDMLRAAVAQGSEVGKVAEGIMARGELV) are NMP. AMP is bound by residues Thr31, Arg36, 57-59 (ELV), 85-88 (GFPR), and Gln92. Residues 126 to 139 (TRAAETAGGPRADD) form an LID region. Arg127 is an ATP binding site. AMP-binding residues include Arg136 and Arg147. Lys175 contributes to the ATP binding site.

It belongs to the adenylate kinase family. Monomer.

The protein localises to the cytoplasm. The catalysed reaction is AMP + ATP = 2 ADP. It participates in purine metabolism; AMP biosynthesis via salvage pathway; AMP from ADP: step 1/1. In terms of biological role, catalyzes the reversible transfer of the terminal phosphate group between ATP and AMP. Plays an important role in cellular energy homeostasis and in adenine nucleotide metabolism. This Parvibaculum lavamentivorans (strain DS-1 / DSM 13023 / NCIMB 13966) protein is Adenylate kinase.